Reading from the N-terminus, the 208-residue chain is Uracil phosphoribosyltransferase (208 aa).

Residues Arg-78, Arg-103, and Asp-130–Ser-138 contribute to the 5-phospho-alpha-D-ribose 1-diphosphate site. Residues Ile-193 and Gly-198–Ala-200 each bind uracil. Asp-199 is a 5-phospho-alpha-D-ribose 1-diphosphate binding site.

It belongs to the UPRTase family. Requires Mg(2+) as cofactor.

The catalysed reaction is UMP + diphosphate = 5-phospho-alpha-D-ribose 1-diphosphate + uracil. The protein operates within pyrimidine metabolism; UMP biosynthesis via salvage pathway; UMP from uracil: step 1/1. Its activity is regulated as follows. Allosterically activated by GTP. Functionally, catalyzes the conversion of uracil and 5-phospho-alpha-D-ribose 1-diphosphate (PRPP) to UMP and diphosphate. The protein is Uracil phosphoribosyltransferase of Shewanella putrefaciens (strain CN-32 / ATCC BAA-453).